Reading from the N-terminus, the 205-residue chain is Outer-membrane lipoprotein LolB (205 aa).

Positions 1–17 are cleaved as a signal peptide; sequence MFLRHVIVFSLIALLTG. A lipid anchor (N-palmitoyl cysteine) is attached at Cys-18. Cys-18 carries the S-diacylglycerol cysteine lipid modification.

It belongs to the LolB family. In terms of assembly, monomer.

The protein localises to the cell outer membrane. Plays a critical role in the incorporation of lipoproteins in the outer membrane after they are released by the LolA protein. This chain is Outer-membrane lipoprotein LolB, found in Pseudomonas syringae pv. syringae (strain B728a).